The chain runs to 317 residues: MQIKLANPRGFCAGVDRAIEIVNRALDVFGPPIYVRHEVVHNRFVVDSLRERGAVFVEELHEVPDDVIVIFSAHGVSRAVQQEAERRGLRIFDATCPLVTKVHMEVLRYAKRGQECVLIGHAGHPEVEGTMGRYDTSFGGQIYLVEDEADVENLEVNGPERLAFVTQTTLSMDDTSRVIDALRAKFPQIDGPRKDDICYATQNRQDAVRGLASESDLVLVVGSPNSSNSNRLRELAERTGTPAYLIDTAEQIRPEWLTDVSAIGITAGASAPEVLVQAVIERLQSLGAEAPDELAGQAENITFSMPQELRERVIASE.

C12 is a binding site for [4Fe-4S] cluster. (2E)-4-hydroxy-3-methylbut-2-enyl diphosphate is bound by residues H41 and H74. Positions 41 and 74 each coordinate dimethylallyl diphosphate. Positions 41 and 74 each coordinate isopentenyl diphosphate. Residue C96 coordinates [4Fe-4S] cluster. Residue H124 participates in (2E)-4-hydroxy-3-methylbut-2-enyl diphosphate binding. A dimethylallyl diphosphate-binding site is contributed by H124. H124 is an isopentenyl diphosphate binding site. Catalysis depends on E126, which acts as the Proton donor. T168 serves as a coordination point for (2E)-4-hydroxy-3-methylbut-2-enyl diphosphate. C198 contributes to the [4Fe-4S] cluster binding site. S226, S227, N228, and S270 together coordinate (2E)-4-hydroxy-3-methylbut-2-enyl diphosphate. Dimethylallyl diphosphate contacts are provided by S226, S227, N228, and S270. Isopentenyl diphosphate-binding residues include S226, S227, N228, and S270.

Belongs to the IspH family. It depends on [4Fe-4S] cluster as a cofactor.

It catalyses the reaction isopentenyl diphosphate + 2 oxidized [2Fe-2S]-[ferredoxin] + H2O = (2E)-4-hydroxy-3-methylbut-2-enyl diphosphate + 2 reduced [2Fe-2S]-[ferredoxin] + 2 H(+). It carries out the reaction dimethylallyl diphosphate + 2 oxidized [2Fe-2S]-[ferredoxin] + H2O = (2E)-4-hydroxy-3-methylbut-2-enyl diphosphate + 2 reduced [2Fe-2S]-[ferredoxin] + 2 H(+). It functions in the pathway isoprenoid biosynthesis; dimethylallyl diphosphate biosynthesis; dimethylallyl diphosphate from (2E)-4-hydroxy-3-methylbutenyl diphosphate: step 1/1. Its pathway is isoprenoid biosynthesis; isopentenyl diphosphate biosynthesis via DXP pathway; isopentenyl diphosphate from 1-deoxy-D-xylulose 5-phosphate: step 6/6. In terms of biological role, catalyzes the conversion of 1-hydroxy-2-methyl-2-(E)-butenyl 4-diphosphate (HMBPP) into a mixture of isopentenyl diphosphate (IPP) and dimethylallyl diphosphate (DMAPP). Acts in the terminal step of the DOXP/MEP pathway for isoprenoid precursor biosynthesis. This Chromohalobacter salexigens (strain ATCC BAA-138 / DSM 3043 / CIP 106854 / NCIMB 13768 / 1H11) protein is 4-hydroxy-3-methylbut-2-enyl diphosphate reductase.